A 249-amino-acid polypeptide reads, in one-letter code: 23S rRNA (guanosine-2'-O-)-methyltransferase RlmB (249 aa).

Positions 200, 220, and 229 each coordinate S-adenosyl-L-methionine.

Belongs to the class IV-like SAM-binding methyltransferase superfamily. RNA methyltransferase TrmH family. RlmB subfamily.

The protein localises to the cytoplasm. The catalysed reaction is guanosine(2251) in 23S rRNA + S-adenosyl-L-methionine = 2'-O-methylguanosine(2251) in 23S rRNA + S-adenosyl-L-homocysteine + H(+). In terms of biological role, specifically methylates the ribose of guanosine 2251 in 23S rRNA. This Xanthomonas campestris pv. campestris (strain ATCC 33913 / DSM 3586 / NCPPB 528 / LMG 568 / P 25) protein is 23S rRNA (guanosine-2'-O-)-methyltransferase RlmB.